The following is a 486-amino-acid chain: Probable transporter MCH1 (486 aa).

Helical transmembrane passes span 31-51 (IFAL…FSMY), 68-88 (SVSI…GYLG), 95-115 (YLAL…SGIF), 135-155 (EMAL…YASL), 174-194 (TYTP…SSLW), 211-231 (VAGI…IIFF), 268-288 (FFTD…GGPF), 312-333 (FSTH…VGFS), 349-369 (VIAL…FTVF), 377-397 (VVTI…PTIV), 409-429 (IWGS…LLFA), and 457-477 (FVIT…IWVF).

The protein belongs to the major facilitator superfamily.

The protein resides in the vacuole membrane. Functionally, probable transporter. This chain is Probable transporter MCH1 (MCH1), found in Yarrowia lipolytica (strain CLIB 122 / E 150) (Yeast).